The sequence spans 337 residues: Sorting nexin-15 (337 aa).

The region spanning 1–130 is the PX domain; the sequence is MSRQAKDDFL…EFFRGGEVTR (130 aa). 4 residues coordinate a 1,2-diacyl-sn-glycero-3-phospho-(1D-myo-inositol-3-phosphate): Arg51, Ser53, Arg87, and Arg96. Omega-N-methylarginine is present on Arg105. The interval 133–156 is disordered; that stretch reads EVSRDLRILPPPLIPTPPPDEARL. A compositionally biased stretch (pro residues) spans 141 to 151; sequence LPPPLIPTPPP. 2 positions are modified to phosphoserine: Ser201 and Ser227. The tract at residues 244–270 is disordered; that stretch reads LDQEPWEPGGQEEEEAEDGEPAPAYLG. Positions 253 to 263 are enriched in acidic residues; the sequence is GQEEEEAEDGE. In terms of domain architecture, MIT spans 265-337; sequence APAYLGQATE…RAEMLHTHLP (73 aa).

Belongs to the sorting nexin family. In terms of assembly, homodimer. Interacts with SNX1, SNX2 and SNX4.

It localises to the cytoplasm. It is found in the membrane. The protein resides in the cytoplasmic vesicle membrane. Its function is as follows. May be involved in several stages of intracellular trafficking. Overexpression of SNX15 disrupts the normal trafficking of proteins from the plasma membrane to recycling endosomes or the TGN. This chain is Sorting nexin-15 (Snx15), found in Mus musculus (Mouse).